A 222-amino-acid chain; its full sequence is MDRPIIVLNFKTYKESTGENALKLAKKCEQVSEEYGVKIIVAPQHMDLRYVSENVNIPVIAQHIDPIDAGGHTGSVLLECAKEAGAKGSLVNHSEKRMKLADISKVVKKLSENDMISIVCTNNVETSAAAAALSPDFVAVEPPELIGSGIPVSKAKPEVVENTVEAVKTVNPDVRVLCGAGISSGEDVKKAVELGTEGVLLASGVILAKDQKKALEELITEM.

9-11 contributes to the substrate binding site; sequence NFK. The active-site Electrophile is the histidine 93. The active-site Proton acceptor is glutamate 141. Substrate is bound by residues isoleucine 146, glycine 181, and 202 to 203; that span reads AS.

It belongs to the triosephosphate isomerase family. As to quaternary structure, homotetramer; dimer of dimers.

It localises to the cytoplasm. The catalysed reaction is D-glyceraldehyde 3-phosphate = dihydroxyacetone phosphate. It functions in the pathway carbohydrate biosynthesis; gluconeogenesis. Its pathway is carbohydrate degradation; glycolysis; D-glyceraldehyde 3-phosphate from glycerone phosphate: step 1/1. In terms of biological role, involved in the gluconeogenesis. Catalyzes stereospecifically the conversion of dihydroxyacetone phosphate (DHAP) to D-glyceraldehyde-3-phosphate (G3P). This is Triosephosphate isomerase from Methanothermus fervidus (strain ATCC 43054 / DSM 2088 / JCM 10308 / V24 S).